Here is a 363-residue protein sequence, read N- to C-terminus: tRNA N6-adenosine threonylcarbamoyltransferase (363 aa).

Fe cation-binding residues include H117 and H121. Substrate-binding positions include 139 to 143, D172, G185, and N287; that span reads LVSGG. Residue D315 coordinates Fe cation.

It belongs to the KAE1 / TsaD family. It depends on Fe(2+) as a cofactor.

The protein localises to the cytoplasm. The catalysed reaction is L-threonylcarbamoyladenylate + adenosine(37) in tRNA = N(6)-L-threonylcarbamoyladenosine(37) in tRNA + AMP + H(+). In terms of biological role, required for the formation of a threonylcarbamoyl group on adenosine at position 37 (t(6)A37) in tRNAs that read codons beginning with adenine. Is involved in the transfer of the threonylcarbamoyl moiety of threonylcarbamoyl-AMP (TC-AMP) to the N6 group of A37, together with TsaE and TsaB. TsaD likely plays a direct catalytic role in this reaction. This is tRNA N6-adenosine threonylcarbamoyltransferase from Cereibacter sphaeroides (strain ATCC 17025 / ATH 2.4.3) (Rhodobacter sphaeroides).